Consider the following 146-residue polypeptide: Hemoglobin subunit beta-1 (146 aa).

The Globin domain maps to 2–146 (HWTAEEKQLI…VSHSLARRYH (145 aa)). Heme b-binding residues include His-63 and His-92.

This sequence belongs to the globin family. As to quaternary structure, the major hemoglobin component (HbIII) is a tetramer of two alpha-2 chains and two beta-1 chains. Red blood cells.

Its function is as follows. Involved in oxygen transport from the lung to the various peripheral tissues. This Varanus albigularis (White-throated monitor) protein is Hemoglobin subunit beta-1 (HBB1).